The following is a 70-amino-acid chain: Large ribosomal subunit protein uL29 (70 aa).

This sequence belongs to the universal ribosomal protein uL29 family.

The chain is Large ribosomal subunit protein uL29 from Clostridium novyi (strain NT).